Reading from the N-terminus, the 130-residue chain is Protein ApaG (130 aa).

The ApaG domain maps to 3-127 (RALTRDIEVT…FSLDSPGLMR (125 aa)).

This chain is Protein ApaG, found in Agrobacterium fabrum (strain C58 / ATCC 33970) (Agrobacterium tumefaciens (strain C58)).